The primary structure comprises 342 residues: Ribosomal RNA small subunit methyltransferase H (342 aa).

S-adenosyl-L-methionine contacts are provided by residues 36 to 38, Asp56, Phe82, Asp100, and Gln107; that span reads GGH. Residues 311-342 are disordered; that stretch reads GESGMGKGNSAAASRFPTADSPFPASANGDAA.

The protein belongs to the methyltransferase superfamily. RsmH family.

Its subcellular location is the cytoplasm. It carries out the reaction cytidine(1402) in 16S rRNA + S-adenosyl-L-methionine = N(4)-methylcytidine(1402) in 16S rRNA + S-adenosyl-L-homocysteine + H(+). In terms of biological role, specifically methylates the N4 position of cytidine in position 1402 (C1402) of 16S rRNA. In Xanthomonas axonopodis pv. citri (strain 306), this protein is Ribosomal RNA small subunit methyltransferase H.